A 287-amino-acid chain; its full sequence is Cyclopropane mycolic acid synthase 1 (287 aa).

S-adenosyl-L-methionine contacts are provided by residues 33–34 (YS), 68–76 (LLDVGCGWG), 94–99 (TLSKNQ), and 123–124 (WE). Cys269 is a catalytic residue.

The protein belongs to the CFA/CMAS family. As to quaternary structure, homodimer.

It localises to the cytoplasm. It carries out the reaction a 1-acyl-2-(9Z)-enoyl-sn-glycero-3-phospholipid + S-adenosyl-L-methionine = a 1-acyl-2-(9-cyclopronane)-acyl-sn-glycero-3-phospholipid + S-adenosyl-L-homocysteine + H(+). Its pathway is lipid metabolism; mycolic acid biosynthesis. Its function is as follows. Catalyzes the conversion of a double bond to a cyclopropane ring at the distal position of an alpha mycolic acid via the transfer of a methylene group from S-adenosyl-L-methionine. Cyclopropanated mycolic acids are key factors participating in cell envelope permeability, host immunomodulation and persistence. The chain is Cyclopropane mycolic acid synthase 1 (cmaA1) from Mycobacterium tuberculosis (strain CDC 1551 / Oshkosh).